A 239-amino-acid chain; its full sequence is Probable transcriptional regulatory protein Sca_0317 (239 aa).

Belongs to the TACO1 family. YeeN subfamily.

It localises to the cytoplasm. The polypeptide is Probable transcriptional regulatory protein Sca_0317 (Staphylococcus carnosus (strain TM300)).